Consider the following 690-residue polypeptide: MFKVYKKEIEVAGKKISLETGKVARQADGAIIASCGETVILATVVGAKKVNPDMDYFPLSVNYQEKYYAGGKIPGGYFKREARPTESEQLISRLIDRPIRPLFPSEFKNEVQLLPTVISYDKDNQPDILAITASSAALAISGMPFMGPVGASRVGLVDGKYILNPSKAELENSTLDLVVAGTKDAVLMVESETSGLTEEVMLDAVKFGHEGFVPVIEMIEELAKECRKPEWTVEKKDLSEVKKKLEENFTEDLTKAFATIDKQDRSNQISEISDKAKQLFADDENYSDFNVNDELKNLEKKIVRTDILKNKKRIDGRGLADVRAIECEVGVLPRTHGSALFTRGETQAIVVTTLGTSDDEQRLESLDGQHRERFMLHYNFPPFSVGETGRIGTGRREVGHGKLAWRAINSSLPPKEEFPYTFRIVSEITESNGSSSMASVCGASLALMDAGVPIKEPVAGIAMGLIKEGDDFSVLSDILGDEDHLGDMDFKVAGTKDGITSLQMDIKITGITFEIMEQALKQAKEGRIHILGEMNKALSESRADVGEHTPKMEQITVDKKDIAAVIGKGGATIREIVEKSGAKLDVNDEGVVTVAAPDEESRNIAMQMIKDITAKAELNKIYSGKVMKIMEFGAFVNFLGKQDGLVHISELATKRVEKVTDIVKEGDEVKVKVIGFDRGKVKLSMKQAAE.

The Mg(2+) site is built by D483 and D489. The KH domain maps to 550-609; that stretch reads PKMEQITVDKKDIAAVIGKGGATIREIVEKSGAKLDVNDEGVVTVAAPDEESRNIAMQMI. Residues 619–686 enclose the S1 motif domain; the sequence is NKIYSGKVMK…DRGKVKLSMK (68 aa).

It belongs to the polyribonucleotide nucleotidyltransferase family. Mg(2+) is required as a cofactor.

The protein localises to the cytoplasm. The catalysed reaction is RNA(n+1) + phosphate = RNA(n) + a ribonucleoside 5'-diphosphate. Its function is as follows. Involved in mRNA degradation. Catalyzes the phosphorolysis of single-stranded polyribonucleotides processively in the 3'- to 5'-direction. This Pelagibacter ubique (strain HTCC1062) protein is Polyribonucleotide nucleotidyltransferase.